Consider the following 463-residue polypeptide: Retinoic acid receptor RXR-gamma (463 aa).

The tract at residues 1–138 (MYGNYSHFMK…TSPGSLVKHI (138 aa)) is modulating. The tract at residues 17-53 (GSPGHSGSTSMSPSAALSTGKPMDSHPSYTDTPVSAP) is disordered. The segment covering 21–33 (HSGSTSMSPSAAL) has biased composition (polar residues). 2 consecutive NR C4-type zinc fingers follow at residues 139–159 (CAIC…CEGC) and 175–199 (CRDN…YQKC). A DNA-binding region (nuclear receptor) is located at residues 139 to 204 (CAICGDRSSG…RYQKCLVMGM (66 aa)). Residues 205-230 (KREAVQEERQRSRERAESEAECASSG) form a hinge region. Positions 211-222 (EERQRSRERAES) are enriched in basic and acidic residues. The interval 211 to 232 (EERQRSRERAESEAECASSGHE) is disordered. The region spanning 231–459 (HEDMPVERIL…TFLMEMLETP (229 aa)) is the NR LBD domain.

The protein belongs to the nuclear hormone receptor family. NR2 subfamily. In terms of assembly, homodimer. Heterodimer with a RAR molecule. Binds DNA preferentially as a RAR/RXR heterodimer. Interacts with RARA. Acetylated by EP300.

The protein resides in the nucleus. The protein localises to the cytoplasm. In terms of biological role, receptor for retinoic acid. Retinoic acid receptors bind as heterodimers to their target response elements in response to their ligands, all-trans or 9-cis retinoic acid, and regulate gene expression in various biological processes. The RAR/RXR heterodimers bind to the retinoic acid response elements (RARE) composed of tandem 5'-AGGTCA-3' sites known as DR1-DR5. The high affinity ligand for RXRs is 9-cis retinoic acid. The protein is Retinoic acid receptor RXR-gamma (RXRG) of Sus scrofa (Pig).